The following is a 225-amino-acid chain: Methyl-CpG-binding domain-containing protein 6 (225 aa).

Residues 25-92 are disordered; the sequence is GDGTLDSSAK…PGWRVEDKIR (68 aa). The MBD domain maps to 71–146; the sequence is RKRAAPGDNW…ENTYFNPDHF (76 aa).

As to quaternary structure, homodimer and heterodimer with MBD5. Interacts with DDM1 via its MBD domain. Interacts with NTF2, RPS2C, HDA6 and AGO4. Expressed in rosette leaves, buds, flowers, stems, mature seeds and roots.

The protein localises to the nucleus. The protein resides in the chromosome. It localises to the nucleolus. In terms of biological role, transcriptional regulator that binds CpG, CpNpN and CpNpG (N is A, T, or C) islands in promoters regardless the DNA methylation status. Plays probably a role in gene silencing. May associate with histone deacetylase proteins (HDAC). Required for nucleolar dominance that consist in the silencing of rRNA genes inherited from one progenitor in genetic hybrids. Recruited to rRNA genes in a DRM2-dependent manner. Maintains gene silencing by interacting with RNA binding proteins (e.g. NTF2, RPS2C, HDA6 and AGO4) and by regulating DNA methylation status. This Arabidopsis thaliana (Mouse-ear cress) protein is Methyl-CpG-binding domain-containing protein 6.